The following is an 89-amino-acid chain: uncharacterized protein (89 aa).

A helical transmembrane segment spans residues 67 to 86; sequence VYLSSMYICFILLAIWMTVW.

It localises to the membrane. This is an uncharacterized protein from Bacillus subtilis (strain 168).